We begin with the raw amino-acid sequence, 418 residues long: Putative ion-transport protein YfeO (418 aa).

12 consecutive transmembrane segments (helical) span residues Leu-10–Val-30, Asp-54–Ile-74, Ala-99–Pro-119, Glu-120–Pro-140, Ile-149–Ile-169, Leu-186–Pro-206, Ile-223–Cys-243, Val-258–Val-278, Asp-300–Phe-320, Gly-322–His-342, Val-343–Val-363, and Leu-371–Met-391.

It belongs to the chloride channel (TC 2.A.49) family.

The protein localises to the cell membrane. The sequence is that of Putative ion-transport protein YfeO from Escherichia coli (strain SMS-3-5 / SECEC).